We begin with the raw amino-acid sequence, 832 residues long: Sodium/hydrogen exchanger 3 (832 aa).

Positions 1–29 (MGRNRSGCVARCVSLTALVLLLCCPVVRS) are cleaved as a signal peptide. Residues 30–66 (SEAETDPDSHTEHGDSHGGSREGNDTGFQIVTFRWEH) are Extracellular-facing. The tract at residues 31-51 (EAETDPDSHTEHGDSHGGSRE) is disordered. The span at 36 to 51 (PDSHTEHGDSHGGSRE) shows a compositional bias: basic and acidic residues. The chain crosses the membrane as a helical span at residues 67–89 (VQTPYVIALWILVASLGKIVFHL). The Cytoplasmic segment spans residues 90-97 (SEKVTSVV). The chain crosses the membrane as a helical span at residues 98–117 (PESALLIVLGLILGGIVWAA). Residues 118-126 (DHSASFTLT) are Extracellular-facing. A helical transmembrane segment spans residues 127 to 144 (PTVFFFYLLPPIVLDAGY). Topologically, residues 145–147 (FMP) are cytoplasmic. Residues 148 to 183 (NRHFFGNLGTILTYAVIGTVWNAATTGLSLYGVFLL) form a helical membrane-spanning segment. Residues glycine 153, glycine 156, and threonine 157 each coordinate a 1,2-diacyl-sn-glycero-3-phospho-(1D-myo-inositol). Topologically, residues 184–196 (GLMGDLKAGLLEF) are extracellular. A helical transmembrane segment spans residues 197-218 (LLFGSLIAAVDPVAVLAVFEEV). Topologically, residues 219–220 (HV) are cytoplasmic. The chain crosses the membrane as a helical span at residues 221 to 252 (NEVLFIIVFGESLLNDAVTVVLYNVFNSFVEV). At 253–259 (GAGNVQG) the chain is on the extracellular side. Residues 260–294 (LDYFKGIVSFFVVSLGGTAVGIIFAFILSLVTRFT) traverse the membrane as a helical segment. At 295–296 (KH) the chain is on the cytoplasmic side. The helical transmembrane segment at 297-319 (VRVIEPGFVFVISYLSYLTADML) threads the bilayer. The Extracellular portion of the chain corresponds to 320–321 (SL). The chain crosses the membrane as a helical span at residues 322–338 (SAILAITFCGICCQKYV). Topologically, residues 339-345 (KANLCEQ) are cytoplasmic. The chain crosses the membrane as a helical span at residues 346–374 (SITTVRYAMKMLASGAETIIFMFLGISAV). At 375 to 382 (NPTIWTWN) the chain is on the extracellular side. A helical membrane pass occupies residues 383–404 (TAFILLTLVFISVYRVIGVVIQ). Topologically, residues 405–417 (TWILNHYRVVQLE) are cytoplasmic. Residues 418–441 (IIDQVVMSYGGLRGAVAFALVVLL) form a helical membrane-spanning segment. At 442 to 448 (DSNYVGE) the chain is on the extracellular side. A helical membrane pass occupies residues 449–482 (RRLFVSTTIIVVYFTVIFQGLTIKPLVKWLKVKR). Over 483–832 (SQHKEPLLNE…PLSFLPESSM (350 aa)) the chain is Cytoplasmic. The a 1,2-diacyl-sn-glycero-3-phospho-(1D-myo-inositol) site is built by glutamine 512, isoleucine 513, and histidine 515. Positions 740–760 (TPASNDADETGTGIDNPSFSN) are disordered.

The protein belongs to the monovalent cation:proton antiporter 1 (CPA1) transporter (TC 2.A.36) family. In terms of assembly, homodimer. Detected in early distal renal tubules in the kidney bundle zone, in proximal and late distal tubules in the kidney sinus zone, in absorptive epithelial cells of the intestine and in rectal epithelium (at protein level). Isoform 1 is expressed strongly in the gills, at intermediate levels in the kidney, spleen, rectum, spiral intestine and skin, and weakly in the brain, blood and rectal gland. Isoform 2 is expressed strongly in the kidney, rectum and spiral intestine, and weakly in muscles and the rectal gland.

It is found in the apical cell membrane. The protein resides in the cell membrane. The protein localises to the recycling endosome membrane. It localises to the early endosome membrane. The catalysed reaction is Na(+)(in) + H(+)(out) = Na(+)(out) + H(+)(in). Seems to switch between active and inactive modes in response to various stimuli. Activated directly or indirectly by membrane phosphatidylinositol (PIs). Regulated by a variety of auxiliary proteins, which facilitate the maturation, cell surface expression and function of the transporter. Inhibited specifically by the drug tenapanor. In terms of biological role, plasma membrane Na(+)/H(+) antiporter. Exchanges intracellular H(+) ions for extracellular Na(+) in 1:1 stoichiometry, playing a key role in salt and fluid absorption and pH homeostasis. Major apical Na(+)/H(+) exchanger in kidney and intestine playing an important role in renal and intestine Na(+) absorption and blood pressure regulation. This Triakis scyllium (Banded houndshark) protein is Sodium/hydrogen exchanger 3.